Here is a 150-residue protein sequence, read N- to C-terminus: Galactose-binding lectin (150 aa).

2 residues coordinate D-galactose: histidine 16 and glycine 19. A glycan (N-linked (GlcNAc...) asparagine) is linked at asparagine 26. D-galactose is bound by residues aspartate 27, 35-37, histidine 64, and glycine 67; that span reads DIH. The N-linked (GlcNAc...) asparagine glycan is linked to asparagine 74. D-galactose contacts are provided by residues glutamate 75, 83 to 85, histidine 108, and glycine 111; that span reads DRH. The N-linked (GlcNAc...) asparagine glycan is linked to asparagine 118. D-galactose contacts are provided by residues glutamate 119 and 127–129; that span reads DKH.

In terms of assembly, homodimer. Likely to form large oligomers; oligomerization enhances hemagglutination activity. In terms of processing, glycosylated.

With respect to regulation, hemagglutination activity is not dependent on divalent cations. Hemagglutination activity is highly inhibited by D-galactose and N-acetyl-D-galactosamine, and to a lesser extent by raffinose. Also inhibited by melibiose and alpha-lactose, but not by beta-lactose or D-glucose. D-galactose-binding lectin. Also binds N-acetyl-D-galactosamine. Has hemagglutination activity towards all types of human erythrocytes (O, A and B) and rabbit erythrocytes. Agglutinates Gram-negative and Gram-positive bacteria including E.coli DH5-alpha and L.plantarum ATCC8014, respectively, and has bacteriostatic activity against them. Also agglutinates M.lysodeikticus. May be involved in innate immunity by recognizing and eliminating pathogens. The sequence is that of Galactose-binding lectin from Mytilus californianus (California mussel).